The primary structure comprises 116 residues: Non-specific lipid-transfer protein (116 aa).

The N-terminal stretch at methionine 1–serine 23 is a signal peptide. 4 cysteine pairs are disulfide-bonded: cysteine 27–cysteine 74, cysteine 37–cysteine 51, cysteine 52–cysteine 97, and cysteine 72–cysteine 111.

The protein belongs to the plant LTP family.

Plant non-specific lipid-transfer proteins transfer phospholipids as well as galactolipids across membranes. May play a role in wax or cutin deposition in the cell walls of expanding epidermal cells and certain secretory tissues. The chain is Non-specific lipid-transfer protein from Cicer arietinum (Chickpea).